The sequence spans 350 residues: Ribosomal RNA large subunit methyltransferase M (350 aa).

Residues 217 to 220 (APGG), Asp-236, Asp-256, and Asp-272 each bind S-adenosyl-L-methionine. The Proton acceptor role is filled by Lys-301.

This sequence belongs to the class I-like SAM-binding methyltransferase superfamily. RNA methyltransferase RlmE family. RlmM subfamily. Monomer.

Its subcellular location is the cytoplasm. It catalyses the reaction cytidine(2498) in 23S rRNA + S-adenosyl-L-methionine = 2'-O-methylcytidine(2498) in 23S rRNA + S-adenosyl-L-homocysteine + H(+). Functionally, catalyzes the 2'-O-methylation at nucleotide C2498 in 23S rRNA. This chain is Ribosomal RNA large subunit methyltransferase M, found in Teredinibacter turnerae (strain ATCC 39867 / T7901).